The sequence spans 372 residues: Delta-type opioid receptor (372 aa).

Over 1-47 the chain is Extracellular; the sequence is MELVPSARAELQSSPLVNLSDAFPSAFPSAGANASGSPGARSASSLA. 2 N-linked (GlcNAc...) asparagine glycosylation sites follow: asparagine 18 and asparagine 33. The chain crosses the membrane as a helical span at residues 48 to 75; the sequence is LAIAITALYSAVCAVGLLGNVLVMFGIV. Residues 76–85 are Cytoplasmic-facing; that stretch reads RYTKLKTATN. The chain crosses the membrane as a helical span at residues 86–110; that stretch reads IYIFNLALADALATSTLPFQSAKYL. At 111–122 the chain is on the extracellular side; sequence METWPFGELLCK. Cysteine 121 and cysteine 198 form a disulfide bridge. The chain crosses the membrane as a helical span at residues 123 to 144; sequence AVLSIDYYNMFTSIFTLTMMSV. Residues 145–163 lie on the Cytoplasmic side of the membrane; the sequence is DRYIAVCHPVKALDFRTPA. The helical transmembrane segment at 164-186 threads the bilayer; that stretch reads KAKLINICIWVLASGVGVPIMVM. Residues 187 to 206 are Extracellular-facing; it reads AVTQPRDGAVVCMLQFPSPS. Residues 207–238 form a helical membrane-spanning segment; the sequence is WYWDTVTKICVFLFAFVVPILIITVCYGLMLL. Topologically, residues 239 to 261 are cytoplasmic; the sequence is RLRSVRLLSGSKEKDRSLRRITR. Residues 262 to 284 traverse the membrane as a helical segment; it reads MVLVVVGAFVVCWAPIHIFVIVW. Residues 285 to 299 are Extracellular-facing; the sequence is TLVDINRRDPLVVAA. The chain crosses the membrane as a helical span at residues 300-321; it reads LHLCIALGYANSSLNPVLYAFL. Residues 322-372 lie on the Cytoplasmic side of the membrane; the sequence is DENFKRCFRQLCRTPCGRQEPGSLRRPRQATTRERVTACTPSDGPGGGAAA. Residue cysteine 333 is the site of S-palmitoyl cysteine attachment. Positions 340–372 are disordered; the sequence is QEPGSLRRPRQATTRERVTACTPSDGPGGGAAA.

It belongs to the G-protein coupled receptor 1 family. As to quaternary structure, may form homooligomers. Forms a heterodimer with OPRM1. Interacts with GPRASP1. Interacts with RTP4; the interaction promotes cell surface localization of the OPRD1-OPRM1 heterodimer. Ubiquitinated. A basal ubiquitination seems not to be related to degradation. Ubiquitination is increased upon formation of OPRM1:OPRD1 oligomers leading to proteasomal degradation; the ubiquitination is diminished by RTP4. As to expression, brain, with high concentrations in the basal ganglia and limbic regions.

Its subcellular location is the cell membrane. Its function is as follows. G-protein coupled receptor that functions as a receptor for endogenous enkephalins and for a subset of other opioids. Ligand binding causes a conformation change that triggers signaling via guanine nucleotide-binding proteins (G proteins) and modulates the activity of down-stream effectors, such as adenylate cyclase. Signaling leads to the inhibition of adenylate cyclase activity. Inhibits neurotransmitter release by reducing calcium ion currents and increasing potassium ion conductance. Plays a role in the perception of pain and in opiate-mediated analgesia. Plays a role in developing analgesic tolerance to morphine. This Mus musculus (Mouse) protein is Delta-type opioid receptor (Oprd1).